The chain runs to 131 residues: Transcription antitermination protein NusB (131 aa).

This sequence belongs to the NusB family.

In terms of biological role, involved in transcription antitermination. Required for transcription of ribosomal RNA (rRNA) genes. Binds specifically to the boxA antiterminator sequence of the ribosomal RNA (rrn) operons. This is Transcription antitermination protein NusB from Campylobacter concisus (strain 13826).